Consider the following 235-residue polypeptide: Large ribosomal subunit protein uL1 (235 aa).

Belongs to the universal ribosomal protein uL1 family. In terms of assembly, part of the 50S ribosomal subunit.

Binds directly to 23S rRNA. The L1 stalk is quite mobile in the ribosome, and is involved in E site tRNA release. Functionally, protein L1 is also a translational repressor protein, it controls the translation of the L11 operon by binding to its mRNA. The polypeptide is Large ribosomal subunit protein uL1 (Renibacterium salmoninarum (strain ATCC 33209 / DSM 20767 / JCM 11484 / NBRC 15589 / NCIMB 2235)).